The sequence spans 118 residues: NAD(P)H-quinone oxidoreductase subunit M (118 aa).

This sequence belongs to the complex I NdhM subunit family. As to quaternary structure, NDH-1 can be composed of about 15 different subunits; different subcomplexes with different compositions have been identified which probably have different functions.

Its subcellular location is the cellular thylakoid membrane. The catalysed reaction is a plastoquinone + NADH + (n+1) H(+)(in) = a plastoquinol + NAD(+) + n H(+)(out). The enzyme catalyses a plastoquinone + NADPH + (n+1) H(+)(in) = a plastoquinol + NADP(+) + n H(+)(out). NDH-1 shuttles electrons from an unknown electron donor, via FMN and iron-sulfur (Fe-S) centers, to quinones in the respiratory and/or the photosynthetic chain. The immediate electron acceptor for the enzyme in this species is believed to be plastoquinone. Couples the redox reaction to proton translocation, and thus conserves the redox energy in a proton gradient. Cyanobacterial NDH-1 also plays a role in inorganic carbon-concentration. The protein is NAD(P)H-quinone oxidoreductase subunit M of Rippkaea orientalis (strain PCC 8801 / RF-1) (Cyanothece sp. (strain PCC 8801)).